We begin with the raw amino-acid sequence, 546 residues long: CTP synthase (546 aa).

The tract at residues 1 to 269 (MADTKYIFVT…DKVTLKKLAL (269 aa)) is amidoligase domain. Serine 15 lines the CTP pocket. Serine 15 contributes to the UTP binding site. 16–21 (SLGKGI) provides a ligand contact to ATP. Tyrosine 56 provides a ligand contact to L-glutamine. Aspartate 73 contacts ATP. Aspartate 73 and glutamate 143 together coordinate Mg(2+). CTP-binding positions include 150 to 152 (DIE), 190 to 195 (KTKPTQ), and lysine 226. UTP is bound by residues 190-195 (KTKPTQ) and lysine 226. Positions 295–537 (HIGLIGKYVE…VKAAHEHSVK (243 aa)) constitute a Glutamine amidotransferase type-1 domain. Residue glycine 357 coordinates L-glutamine. Catalysis depends on cysteine 384, which acts as the Nucleophile; for glutamine hydrolysis. L-glutamine contacts are provided by residues 385 to 388 (LGMQ), glutamate 408, and arginine 465. Active-site residues include histidine 510 and glutamate 512.

It belongs to the CTP synthase family. As to quaternary structure, homotetramer.

The catalysed reaction is UTP + L-glutamine + ATP + H2O = CTP + L-glutamate + ADP + phosphate + 2 H(+). It carries out the reaction L-glutamine + H2O = L-glutamate + NH4(+). It catalyses the reaction UTP + NH4(+) + ATP = CTP + ADP + phosphate + 2 H(+). The protein operates within pyrimidine metabolism; CTP biosynthesis via de novo pathway; CTP from UDP: step 2/2. Its activity is regulated as follows. Allosterically activated by GTP, when glutamine is the substrate; GTP has no effect on the reaction when ammonia is the substrate. The allosteric effector GTP functions by stabilizing the protein conformation that binds the tetrahedral intermediate(s) formed during glutamine hydrolysis. Inhibited by the product CTP, via allosteric rather than competitive inhibition. Catalyzes the ATP-dependent amination of UTP to CTP with either L-glutamine or ammonia as the source of nitrogen. Regulates intracellular CTP levels through interactions with the four ribonucleotide triphosphates. The chain is CTP synthase from Christiangramia forsetii (strain DSM 17595 / CGMCC 1.15422 / KT0803) (Gramella forsetii).